Here is an 823-residue protein sequence, read N- to C-terminus: Adhesion G protein-coupled receptor E2 (823 aa).

The N-terminal stretch at 1–23 (MGGRVFLVFLAFCVWLTLPGAET) is a signal peptide. Over 24-540 (QDSRGCARWC…EEDPVLTVIT (517 aa)) the chain is Extracellular. The EGF-like 1 domain occupies 25 to 66 (DSRGCARWCPQDSSCVNATACRCNPGFSSFSEIITTPMETCD). Cystine bridges form between cysteine 29–cysteine 39, cysteine 33–cysteine 45, cysteine 47–cysteine 65, cysteine 71–cysteine 85, cysteine 79–cysteine 94, cysteine 96–cysteine 117, cysteine 123–cysteine 136, cysteine 130–cysteine 145, cysteine 147–cysteine 161, cysteine 167–cysteine 180, cysteine 174–cysteine 189, cysteine 191–cysteine 210, cysteine 216–cysteine 229, cysteine 223–cysteine 238, and cysteine 240–cysteine 259. A glycan (N-linked (GlcNAc...) asparagine) is linked at asparagine 41. In terms of domain architecture, EGF-like 2; calcium-binding spans 67-118 (DINECATLSKVSCGKFSDCWNTEGSYDCVCSPGYEPVSGAKTFKNESENTCQ). The N-linked (GlcNAc...) asparagine glycan is linked to asparagine 111. Positions 119 to 162 (DVDECQQNPRLCKSYGTCVNTLGSYTCQCLPGFKLKPEDPKLCT) constitute an EGF-like 3; calcium-binding domain. The region spanning 163 to 211 (DVNECTSGQNPCHSSTHCLNNVGSYQCRCRPGWQPIPGSPNGPNNTVCE) is the EGF-like 4; calcium-binding domain. Asparagine 206 carries an N-linked (GlcNAc...) asparagine glycan. The EGF-like 5; calcium-binding domain occupies 212–260 (DVDECSSGQHQCDSSTVCFNTVGSYSCRCRPGWKPRHGIPNNQKDTVCE). Asparagine 298, asparagine 347, asparagine 354, asparagine 456, and asparagine 460 each carry an N-linked (GlcNAc...) asparagine glycan. The region spanning 354 to 530 (NFSYPAGTEL…AVLMAHYDVQ (177 aa)) is the GAIN-B domain. Cystine bridges form between cysteine 482–cysteine 512 and cysteine 500–cysteine 514. A GPS region spans residues 482–530 (CVFWEHGQNGCGHWATTGCSTIGTRDTSTICRCTHLSSFAVLMAHYDVQ). Residues 541 to 561 (YMGLSVSLLCLLLAALTFLLC) traverse the membrane as a helical segment. At 562–569 (KAIQNTST) the chain is on the cytoplasmic side. A helical membrane pass occupies residues 570-590 (SLHLQLSLCLFLAHLLFLVAI). The Extracellular segment spans residues 591–605 (DQTGHKVLCSIIAGT). The helical transmembrane segment at 606–626 (LHYLYLATLTWMLLEALYLFL) threads the bilayer. Topologically, residues 627-644 (TARNLTVVNYSSINRFMK) are cytoplasmic. The helical transmembrane segment at 645-665 (KLMFPVGYGVPAVTVAISAAS) threads the bilayer. The Extracellular portion of the chain corresponds to 666–683 (RPHLYGTPSRCWLQPEKG). The helical transmembrane segment at 684–704 (FIWGFLGPVCAIFSVNLVLFL) threads the bilayer. The Cytoplasmic portion of the chain corresponds to 705 to 735 (VTLWILKNRLSSLNSEVSTLRNTRMLAFKAT). The helical transmembrane segment at 736 to 756 (AQLFILGCTWCLGILQVGPAA) threads the bilayer. Residues 757–760 (RVMA) lie on the Extracellular side of the membrane. Residues 761-781 (YLFTIINSLQGVFIFLVYCLL) form a helical membrane-spanning segment. Residues 782 to 823 (SQQVREQYGKWSKGIRKLKTESEMHTLSSSAKADTSKPSTVN) lie on the Cytoplasmic side of the membrane.

It belongs to the G-protein coupled receptor 2 family. Adhesion G-protein coupled receptor (ADGR) subfamily. As to quaternary structure, forms a heterodimer, consisting of a large extracellular region non-covalently linked to a seven-transmembrane moiety. Interacts with chondroitin sulfate; the interaction with chondroitin sulfate is calcium-dependent. Interacts with CD55. Post-translationally, autoproteolytically cleaved into 2 subunits, an extracellular alpha subunit and a seven-transmembrane beta subunit. Expression is restricted to myeloid cells. Highest expression was found in peripheral blood leukocytes, followed by spleen and lymph nodes, with intermediate to low levels in thymus, bone marrow, fetal liver, placenta, and lung, and no expression in heart, brain, skeletal muscle, kidney, or pancreas. Expression is also detected in monocyte/macrophage and Jurkat cell lines but not in other cell lines tested. High expression in mast cells.

It localises to the cell membrane. It is found in the cell projection. The protein resides in the ruffle membrane. Functionally, cell surface receptor that binds to the chondroitin sulfate moiety of glycosaminoglycan chains and promotes cell attachment. Promotes granulocyte chemotaxis, degranulation and adhesion. In macrophages, promotes the release of inflammatory cytokines, including IL8 and TNF. Signals probably through G-proteins. Is a regulator of mast cell degranulation. This chain is Adhesion G protein-coupled receptor E2, found in Homo sapiens (Human).